The sequence spans 287 residues: Ferredoxin-type protein NapH (287 aa).

At 1 to 29 (MANRKRDAGREALEKKGWWRSHRWLVLRR) the chain is on the cytoplasmic side. Residues 30 to 50 (LCQFFVLGMFLSGPWFGVWIL) form a helical membrane-spanning segment. Residues 51–79 (HGNYSSSLLFDTVPLTDPLMTLQSLASGH) lie on the Periplasmic side of the membrane. Residues 80–100 (LPATVALTGAVIITVLYALAG) form a helical membrane-spanning segment. Over 101–139 (KRLFCSWVCPLNPITDLANWLRRRFDLNQSATIPRHIRY) the chain is Cytoplasmic. The chain crosses the membrane as a helical span at residues 140–160 (VLLVVILVGSALTGTLIWEWI). Over 161 to 170 (NPVSLMGRSL) the chain is Periplasmic. The chain crosses the membrane as a helical span at residues 171–191 (VMGFGSGALLILALFLFDLLV). Over 192-287 (VEHGWCGHIC…TTRWSSGAKS (96 aa)) the chain is Cytoplasmic. 2 4Fe-4S ferredoxin-type domains span residues 217–247 (TVAATDRQKCNRCMDCFHVCPEPHVLRAPVL) and 251–280 (SPVQVTSRDCMTCGRCVDVCSEDVFTITTR). [4Fe-4S] cluster contacts are provided by C226, C229, C232, C236, C260, C263, C266, and C270.

Interacts with NapC. [4Fe-4S] cluster serves as cofactor.

Its subcellular location is the cell inner membrane. Required for electron transfer from ubiquinol, via NapC, to the periplasmic nitrate reductase NapAB complex. The protein is Ferredoxin-type protein NapH (napH) of Escherichia coli (strain K12).